The chain runs to 97 residues: Co-chaperonin GroES (97 aa).

Belongs to the GroES chaperonin family. As to quaternary structure, heptamer of 7 subunits arranged in a ring. Interacts with the chaperonin GroEL.

The protein localises to the cytoplasm. In terms of biological role, together with the chaperonin GroEL, plays an essential role in assisting protein folding. The GroEL-GroES system forms a nano-cage that allows encapsulation of the non-native substrate proteins and provides a physical environment optimized to promote and accelerate protein folding. GroES binds to the apical surface of the GroEL ring, thereby capping the opening of the GroEL channel. This Aeromonas hydrophila subsp. hydrophila (strain ATCC 7966 / DSM 30187 / BCRC 13018 / CCUG 14551 / JCM 1027 / KCTC 2358 / NCIMB 9240 / NCTC 8049) protein is Co-chaperonin GroES.